The sequence spans 526 residues: Lysine--tRNA ligase (526 aa).

The 'HIGH' region signature appears at Pro-44–Thr-52. The short motif at Lys-290–Ser-294 is the 'KMSKS' region element. Lys-293 provides a ligand contact to ATP.

Belongs to the class-I aminoacyl-tRNA synthetase family.

It localises to the cytoplasm. It catalyses the reaction tRNA(Lys) + L-lysine + ATP = L-lysyl-tRNA(Lys) + AMP + diphosphate. The protein is Lysine--tRNA ligase of Rickettsia typhi (strain ATCC VR-144 / Wilmington).